The sequence spans 303 residues: sn-1-specific diacylglycerol lipase ABHD11 (303 aa).

The transit peptide at 1–22 (MLRWTRAWTAPYRGIGLSNSSF) directs the protein to the mitochondrion. The region spanning 55 to 290 (PALVFLHGLF…NAGHWVHSDR (236 aa)) is the AB hydrolase-1 domain. Lys75 carries the N6-succinyllysine modification. Catalysis depends on charge relay system residues Ser129, Asp225, and His284.

Belongs to the AB hydrolase superfamily. Interacts with OGDH and DLST; this interaction maintains the functional lipoylation of the 2-oxoglutarate dehydrogenase complex. Phosphorylated.

It localises to the mitochondrion. It is found in the mitochondrion matrix. The enzyme catalyses a 1,3-diacyl-sn-glycerol + H2O = a 1-acyl-sn-glycerol + a fatty acid + H(+). It catalyses the reaction 1-octadecanoyl-2-(9Z-octadecenoyl)-sn-glycerol + H2O = 2-(9Z-octadecenoyl)-glycerol + octadecanoate + H(+). It carries out the reaction 1-octadecanoyl-2-(4Z,7Z,10Z,13Z,16Z,19Z-docosahexaenoyl)-sn-glycerol + H2O = 2-(4Z,7Z,10Z,13Z,16Z,19Z-docosahexaenoyl)-glycerol + octadecanoate + H(+). The catalysed reaction is a 1,2-diacyl-sn-glycerol + H2O = a 2-acylglycerol + a fatty acid + H(+). The enzyme catalyses 1,2-didecanoylglycerol + H2O = decanoylglycerol + decanoate + H(+). It catalyses the reaction 1-octadecanoyl-2-(5Z,8Z,11Z,14Z-eicosatetraenoyl)-sn-glycerol + H2O = 2-(5Z,8Z,11Z,14Z-eicosatetraenoyl)-glycerol + octadecanoate + H(+). With respect to regulation, the diacylglycerol lipase activity can be modulated by phosphorylation by cAMP-dependent protein kinase. Catalyzes the hydrolysis of diacylglycerol in vitro and may function as a key regulator in lipid metabolism, namely by regulating the intracellular levels of diacylglycerol. 1,2-diacyl-sn-glycerols are the preferred substrate over 1,3-diacyl-sn-glycerols. The enzyme hydrolyzes stearate in preference to palmitate from the sn-1 position of 1,2-diacyl-sn-glycerols. Maintains the functional lipoylation of the 2-oxoglutarate dehydrogenase complex (OGDHc) through its interaction with the OGDHc by preventing the formation of lipoyl adducts. In addition, is also required for the expansion and differentiation of embryonic stem cells (ESCs). This chain is sn-1-specific diacylglycerol lipase ABHD11, found in Bos taurus (Bovine).